The following is a 103-amino-acid chain: Large ribosomal subunit protein bL21 (103 aa).

The protein belongs to the bacterial ribosomal protein bL21 family. In terms of assembly, part of the 50S ribosomal subunit. Contacts protein L20.

In terms of biological role, this protein binds to 23S rRNA in the presence of protein L20. This chain is Large ribosomal subunit protein bL21, found in Heliobacterium modesticaldum (strain ATCC 51547 / Ice1).